Here is a 216-residue protein sequence, read N- to C-terminus: uncharacterized protein (216 aa).

It is found in the plastid. The protein resides in the chloroplast. This is an uncharacterized protein from Pyropia yezoensis (Susabi-nori).